Here is a 632-residue protein sequence, read N- to C-terminus: Phosphomethylpyrimidine synthase (632 aa).

Residues 1–13 show a composition bias toward polar residues; sequence MNIRSNPDTTLPA. The disordered stretch occupies residues 1–26; the sequence is MNIRSNPDTTLPAVTTGPLPSSRKIF. Residues asparagine 221, methionine 250, tyrosine 279, histidine 315, 335–337, 376–379, and glutamate 415 each bind substrate; these read SRG and DGLR. Histidine 419 is a binding site for Zn(2+). Tyrosine 442 lines the substrate pocket. Residue histidine 483 participates in Zn(2+) binding. [4Fe-4S] cluster is bound by residues cysteine 563, cysteine 566, and cysteine 571.

Belongs to the ThiC family. Homodimer. [4Fe-4S] cluster serves as cofactor.

The enzyme catalyses 5-amino-1-(5-phospho-beta-D-ribosyl)imidazole + S-adenosyl-L-methionine = 4-amino-2-methyl-5-(phosphooxymethyl)pyrimidine + CO + 5'-deoxyadenosine + formate + L-methionine + 3 H(+). It participates in cofactor biosynthesis; thiamine diphosphate biosynthesis. Functionally, catalyzes the synthesis of the hydroxymethylpyrimidine phosphate (HMP-P) moiety of thiamine from aminoimidazole ribotide (AIR) in a radical S-adenosyl-L-methionine (SAM)-dependent reaction. This chain is Phosphomethylpyrimidine synthase, found in Afipia carboxidovorans (strain ATCC 49405 / DSM 1227 / KCTC 32145 / OM5) (Oligotropha carboxidovorans).